Consider the following 1070-residue polypeptide: DNA-directed RNA polymerase subunit beta (1070 aa).

This sequence belongs to the RNA polymerase beta chain family. As to quaternary structure, in plastids the minimal PEP RNA polymerase catalytic core is composed of four subunits: alpha, beta, beta', and beta''. When a (nuclear-encoded) sigma factor is associated with the core the holoenzyme is formed, which can initiate transcription.

The protein resides in the plastid. It localises to the chloroplast. It carries out the reaction RNA(n) + a ribonucleoside 5'-triphosphate = RNA(n+1) + diphosphate. Functionally, DNA-dependent RNA polymerase catalyzes the transcription of DNA into RNA using the four ribonucleoside triphosphates as substrates. The chain is DNA-directed RNA polymerase subunit beta from Nicotiana tomentosiformis (Tobacco).